The following is a 339-amino-acid chain: RxLR effector protein SFI4 (339 aa).

The first 24 residues, 1 to 24 (MRVLRVTFLWALLLLVAFSASVYA), serve as a signal peptide directing secretion. The short motif at 51–74 (RGLRNSGMKLNDAKDFKGAIAKLR) is the RxLR-dEER element. TPR repeat units follow at residues 106-139 (AQIL…VEKI), 190-223 (IEAS…QNGE), 232-265 (AELY…FRQR), and 274-307 (AFSL…AVQI).

It belongs to the RxLR effector family.

Its subcellular location is the secreted. The protein resides in the host nucleus. It localises to the host cytoplasm. In terms of biological role, effector that suppresses flg22-induced post-translational MAP kinase activation in tomato but not in Arabidopsis. The perception of highly conserved pathogen- or microbe-associated molecular patterns (PAMPs/MAMPs), such as flg22, triggers converging signaling pathways recruiting MAP kinase cascades and inducing transcriptional re-programming, yielding a generic antimicrobial response. This Phytophthora infestans (strain T30-4) (Potato late blight agent) protein is RxLR effector protein SFI4.